Here is a 704-residue protein sequence, read N- to C-terminus: Protein cueball (704 aa).

An N-terminal signal peptide occupies residues 1–26; that stretch reads MKSPCRAAAGWLVLLLSSCCLGYVIA. Residues 27 to 594 are Extracellular-facing; that stretch reads TEWAAAVTTD…TYCKESFNRT (568 aa). LDL-receptor class B repeat units follow at residues 69 to 119, 120 to 166, 199 to 242, and 243 to 288; these read GKLY…DHLE, RRLY…EATT, RHLY…DHYR, and NRLY…KNDY. Residues N152 and N219 are each glycosylated (N-linked (GlcNAc...) asparagine). EGF-like domains are found at residues 363 to 397, 432 to 478, and 514 to 551; these read TQQQGQLTVCLNNGTVNHHTNTCLCQPAFGGKLCE, DRNR…ARCE, and EEYSCNNYCLNGGHCTLGNETTVPECECGEEFAGQRCE. 8 disulfides stabilise this stretch: C372–C385, C387–C396, C436–C446, C440–C465, C467–C477, C518–C528, C522–C539, and C541–C550. N375 is a glycosylation site (N-linked (GlcNAc...) asparagine). N450 is a glycosylation site (N-linked (GlcNAc...) asparagine). An N-linked (GlcNAc...) asparagine glycan is attached at N532. N592 carries an N-linked (GlcNAc...) asparagine glycan. A helical transmembrane segment spans residues 595 to 615; that stretch reads VVYTSLCFTVSFALLLAVVLV. Residues 616–704 are Cytoplasmic-facing; the sequence is VSRMMKPPRP…NCGDGTAERK (89 aa).

The protein belongs to the cueball family.

It is found in the cell membrane. In terms of biological role, has a role in spermatogenesis and oogenesis. This Anopheles gambiae (African malaria mosquito) protein is Protein cueball.